The primary structure comprises 264 residues: Undecaprenyl-diphosphatase 2 (264 aa).

7 helical membrane-spanning segments follow: residues 29–49 (GSAF…SYFW), 77–97 (SWIV…SGVL), 107–127 (LTVI…AEIF), 137–157 (ASLA…IPGV), 180–200 (FSFL…LWEL), 212–232 (VLAT…WGLM), and 243–263 (FVIY…MGWL).

Belongs to the UppP family.

It is found in the cell inner membrane. The enzyme catalyses di-trans,octa-cis-undecaprenyl diphosphate + H2O = di-trans,octa-cis-undecaprenyl phosphate + phosphate + H(+). Its function is as follows. Catalyzes the dephosphorylation of undecaprenyl diphosphate (UPP). Confers resistance to bacitracin. The chain is Undecaprenyl-diphosphatase 2 from Mesorhizobium japonicum (strain LMG 29417 / CECT 9101 / MAFF 303099) (Mesorhizobium loti (strain MAFF 303099)).